We begin with the raw amino-acid sequence, 364 residues long: Histidinol-phosphate aminotransferase (364 aa).

The residue at position 226 (lysine 226) is an N6-(pyridoxal phosphate)lysine.

Belongs to the class-II pyridoxal-phosphate-dependent aminotransferase family. Histidinol-phosphate aminotransferase subfamily. Homodimer. Pyridoxal 5'-phosphate serves as cofactor.

The enzyme catalyses L-histidinol phosphate + 2-oxoglutarate = 3-(imidazol-4-yl)-2-oxopropyl phosphate + L-glutamate. Its pathway is amino-acid biosynthesis; L-histidine biosynthesis; L-histidine from 5-phospho-alpha-D-ribose 1-diphosphate: step 7/9. This is Histidinol-phosphate aminotransferase from Campylobacter jejuni subsp. jejuni serotype O:2 (strain ATCC 700819 / NCTC 11168).